The chain runs to 448 residues: Homogentisate 1,2-dioxygenase (448 aa).

The Proton acceptor role is filled by His303. Fe cation is bound by residues His346 and Glu352. Tyr361 and His382 together coordinate homogentisate. A Fe cation-binding site is contributed by His382.

This sequence belongs to the homogentisate dioxygenase family. Hexamer; dimer of trimers. It depends on Fe cation as a cofactor.

The catalysed reaction is homogentisate + O2 = 4-maleylacetoacetate + H(+). The protein operates within amino-acid degradation; L-phenylalanine degradation; acetoacetate and fumarate from L-phenylalanine: step 4/6. In terms of biological role, involved in the catabolism of homogentisate (2,5-dihydroxyphenylacetate or 2,5-OH-PhAc), a central intermediate in the degradation of phenylalanine and tyrosine. Catalyzes the oxidative ring cleavage of the aromatic ring of homogentisate to yield maleylacetoacetate. This chain is Homogentisate 1,2-dioxygenase, found in Bradyrhizobium diazoefficiens (strain JCM 10833 / BCRC 13528 / IAM 13628 / NBRC 14792 / USDA 110).